Reading from the N-terminus, the 428-residue chain is 3-oxo-tetronate kinase (428 aa).

Residues serine 267, 365–368 (GGET), and glycine 409 contribute to the ATP site.

This sequence belongs to the four-carbon acid sugar kinase family.

It carries out the reaction 3-dehydro-L-erythronate + ATP = 3-dehydro-4-O-phospho-L-erythronate + ADP + H(+). It catalyses the reaction 3-dehydro-D-erythronate + ATP = 3-dehydro-4-O-phospho-D-erythronate + ADP + H(+). Its function is as follows. Catalyzes the ATP-dependent phosphorylation of 3-oxo-tetronate to 3-oxo-tetronate 4-phosphate. The polypeptide is 3-oxo-tetronate kinase (Burkholderia multivorans (strain ATCC 17616 / 249)).